The sequence spans 145 residues: Ribosome-binding factor A (145 aa).

The interval 126–145 (RDLDTETDAEAGSETTKEED) is disordered. Residues 130–145 (TETDAEAGSETTKEED) are compositionally biased toward acidic residues.

This sequence belongs to the RbfA family. Monomer. Binds 30S ribosomal subunits, but not 50S ribosomal subunits or 70S ribosomes.

Its subcellular location is the cytoplasm. Functionally, one of several proteins that assist in the late maturation steps of the functional core of the 30S ribosomal subunit. Associates with free 30S ribosomal subunits (but not with 30S subunits that are part of 70S ribosomes or polysomes). Required for efficient processing of 16S rRNA. May interact with the 5'-terminal helix region of 16S rRNA. The sequence is that of Ribosome-binding factor A from Azorhizobium caulinodans (strain ATCC 43989 / DSM 5975 / JCM 20966 / LMG 6465 / NBRC 14845 / NCIMB 13405 / ORS 571).